A 315-amino-acid chain; its full sequence is MAQPRIGQKVVVDVPATTANLGPGFDCLGAALDLNNRFAMRRIEGGGERFELIIEGSEGSHLRGGPENLVYRAAQRVWKAAGLEPVALEARVRLAVPPARGLGSSATAIVAGLMGANALVGEPLSKEKLLELAIDIEGHPDNVVPSLLGGLCMTAKAASQRWRVVRCEWTPSVKAVVAIPSIRLSTSEARRAMPKAIPVSDAVVNLGALTLLLQGLRTGNGDLISDGMHDRLHEPYRWRLIKGGDQVKQAAMEAGAWGCAISGAGPSVLALCEEDKGPAVSRAMVKAWEAAGVASRAPVLNLQTSGSHWQPAEDE.

P97–T107 is an ATP binding site.

Belongs to the GHMP kinase family. Homoserine kinase subfamily.

It is found in the cytoplasm. The enzyme catalyses L-homoserine + ATP = O-phospho-L-homoserine + ADP + H(+). It functions in the pathway amino-acid biosynthesis; L-threonine biosynthesis; L-threonine from L-aspartate: step 4/5. Its function is as follows. Catalyzes the ATP-dependent phosphorylation of L-homoserine to L-homoserine phosphate. The polypeptide is Homoserine kinase (Synechococcus sp. (strain CC9605)).